Consider the following 335-residue polypeptide: N-acetyl-gamma-glutamyl-phosphate reductase (335 aa).

The active site involves Cys-156.

This sequence belongs to the NAGSA dehydrogenase family. Type 1 subfamily.

Its subcellular location is the cytoplasm. The enzyme catalyses N-acetyl-L-glutamate 5-semialdehyde + phosphate + NADP(+) = N-acetyl-L-glutamyl 5-phosphate + NADPH + H(+). Its pathway is amino-acid biosynthesis; L-arginine biosynthesis; N(2)-acetyl-L-ornithine from L-glutamate: step 3/4. In terms of biological role, catalyzes the NADPH-dependent reduction of N-acetyl-5-glutamyl phosphate to yield N-acetyl-L-glutamate 5-semialdehyde. The protein is N-acetyl-gamma-glutamyl-phosphate reductase of Tolumonas auensis (strain DSM 9187 / NBRC 110442 / TA 4).